The chain runs to 520 residues: Trichothecene O-acetyltransferase TRI3 (520 aa).

Positions 1–23 (MGSKLPELPKLSPEKHRWEKSNV) are disordered. Basic and acidic residues predominate over residues 12-23 (SPEKHRWEKSNV).

The protein belongs to the trichothecene O-acetyltransferase family.

It functions in the pathway sesquiterpene biosynthesis; trichothecene biosynthesis. Functionally, trichothecene O-acetyltransferase; part of the gene cluster that mediates the production of the antimicrobial trichothecene harzianum A (HA) that plays a role in Botrytis cinerea antagonistic activity and plant defense priming. The biosynthesis of harzianum A begins with the cyclization of farnesyl diphosphate to trichodiene and is catalyzed by the trichodiene synthase TRI5. Trichodiene undergoes a series of oxygenations catalyzed by the cytochrome P450 monooxygenase TRI4. TRI4 controls the addition of 3 oxygens at C-2, C-11, and the C-12, C-13-epoxide to form the intermediate isotrichodiol. Isotrichodiol then undergoes a non-enzymatic isomerization and cyclization to form 12,13-epoxytrichothec-9-ene (EPT) which is further converted to trichodermol by the cytochrome P450 monooxygenase TRI11 via C-4 hydroxylation. The last step of HA synthesis is esterification of an octatriendioyl moiety to the C-4 oxygen of trichodermol. The octatriendioyl moiety is probably produced by the polyketide synthase TRI17 and the esterification performed by the trichothecene O-acetyltransferase TRI3. In Trichoderma arundinaceum, this protein is Trichothecene O-acetyltransferase TRI3.